The following is a 340-amino-acid chain: Phenylalanine--tRNA ligase alpha subunit (340 aa).

Glutamate 258 contacts Mg(2+).

It belongs to the class-II aminoacyl-tRNA synthetase family. Phe-tRNA synthetase alpha subunit type 1 subfamily. As to quaternary structure, tetramer of two alpha and two beta subunits. Mg(2+) serves as cofactor.

It is found in the cytoplasm. It catalyses the reaction tRNA(Phe) + L-phenylalanine + ATP = L-phenylalanyl-tRNA(Phe) + AMP + diphosphate + H(+). The sequence is that of Phenylalanine--tRNA ligase alpha subunit from Corynebacterium glutamicum (strain ATCC 13032 / DSM 20300 / JCM 1318 / BCRC 11384 / CCUG 27702 / LMG 3730 / NBRC 12168 / NCIMB 10025 / NRRL B-2784 / 534).